The sequence spans 309 residues: Cell division protein FtsQ (309 aa).

The Cytoplasmic segment spans residues 1–52 (MLALRGRRGKRVRYPADGVAEADEAFVLPRPLRRGVRFLISLGAGRIRFPNH). Residues 53–74 (TGTVAAAAFMVATGLYGMSLGG) form a helical membrane-spanning segment. At 75–309 (HTQSFAQVST…KMLKAQEKRI (235 aa)) the chain is on the periplasmic side. Positions 89 to 157 (FAIEDVRVSG…GTIEVVLKER (69 aa)) constitute a POTRA domain.

It belongs to the FtsQ/DivIB family. FtsQ subfamily.

Its subcellular location is the cell inner membrane. In terms of biological role, essential cell division protein. This chain is Cell division protein FtsQ, found in Rhizobium meliloti (strain 1021) (Ensifer meliloti).